The primary structure comprises 122 residues: Large ribosomal subunit protein uL14 (122 aa).

This sequence belongs to the universal ribosomal protein uL14 family. Part of the 50S ribosomal subunit. Forms a cluster with proteins L3 and L19. In the 70S ribosome, L14 and L19 interact and together make contacts with the 16S rRNA in bridges B5 and B8.

In terms of biological role, binds to 23S rRNA. Forms part of two intersubunit bridges in the 70S ribosome. In Francisella tularensis subsp. holarctica (strain LVS), this protein is Large ribosomal subunit protein uL14.